Here is a 211-residue protein sequence, read N- to C-terminus: Ribonuclease HII (211 aa).

Positions 1 to 205 constitute an RNase H type-2 domain; that stretch reads MRFGVDEAGK…CDDVLAAASQ (205 aa). Positions 6, 7, and 100 each coordinate a divalent metal cation.

Belongs to the RNase HII family. Mn(2+) serves as cofactor. Mg(2+) is required as a cofactor.

It localises to the cytoplasm. It catalyses the reaction Endonucleolytic cleavage to 5'-phosphomonoester.. In terms of biological role, endonuclease that specifically degrades the RNA of RNA-DNA hybrids. In Haloarcula marismortui (strain ATCC 43049 / DSM 3752 / JCM 8966 / VKM B-1809) (Halobacterium marismortui), this protein is Ribonuclease HII.